The sequence spans 394 residues: Elongation factor Tu (394 aa).

Residues 10-204 (KPHVNVGTIG…ALDSYIPEPE (195 aa)) form the tr-type G domain. Residues 19–26 (GHVDHGKT) form a G1 region. 19 to 26 (GHVDHGKT) is a binding site for GTP. Thr-26 is a binding site for Mg(2+). The tract at residues 60 to 64 (GITIN) is G2. The interval 81-84 (DCPG) is G3. GTP-binding positions include 81 to 85 (DCPGH) and 136 to 139 (NKCD). The G4 stretch occupies residues 136-139 (NKCD). The interval 174-176 (SAL) is G5.

Belongs to the TRAFAC class translation factor GTPase superfamily. Classic translation factor GTPase family. EF-Tu/EF-1A subfamily. As to quaternary structure, monomer.

Its subcellular location is the cytoplasm. The enzyme catalyses GTP + H2O = GDP + phosphate + H(+). GTP hydrolase that promotes the GTP-dependent binding of aminoacyl-tRNA to the A-site of ribosomes during protein biosynthesis. The protein is Elongation factor Tu of Shewanella amazonensis (strain ATCC BAA-1098 / SB2B).